The sequence spans 363 residues: Ribosomal RNA large subunit methyltransferase M (363 aa).

S-adenosyl-L-methionine-binding positions include Ser194, 227–230 (CPGG), Asp246, Asp266, and Asp284. The active-site Proton acceptor is Lys313.

It belongs to the class I-like SAM-binding methyltransferase superfamily. RNA methyltransferase RlmE family. RlmM subfamily. In terms of assembly, monomer.

It is found in the cytoplasm. The catalysed reaction is cytidine(2498) in 23S rRNA + S-adenosyl-L-methionine = 2'-O-methylcytidine(2498) in 23S rRNA + S-adenosyl-L-homocysteine + H(+). Its function is as follows. Catalyzes the 2'-O-methylation at nucleotide C2498 in 23S rRNA. The sequence is that of Ribosomal RNA large subunit methyltransferase M from Haemophilus influenzae (strain PittEE).